We begin with the raw amino-acid sequence, 73 residues long: UPF0346 protein Lreu_0775 (73 aa).

Belongs to the UPF0346 family.

This Limosilactobacillus reuteri (strain DSM 20016) (Lactobacillus reuteri) protein is UPF0346 protein Lreu_0775.